The primary structure comprises 471 residues: 8-amino-7-oxononanoate synthase (471 aa).

Arg-40 is a binding site for substrate. A pyridoxal 5'-phosphate-binding site is contributed by 131–132 (GY). His-156 provides a ligand contact to substrate. Ser-202, His-230, and Thr-258 together coordinate pyridoxal 5'-phosphate. Lys-261 is modified (N6-(pyridoxal phosphate)lysine). A substrate-binding site is contributed by Thr-377. Residues 409–471 (SEGQTRREAE…LGAARRETAA (63 aa)) are disordered.

It belongs to the class-II pyridoxal-phosphate-dependent aminotransferase family. BioF subfamily. Homodimer. Pyridoxal 5'-phosphate is required as a cofactor.

It catalyses the reaction 6-carboxyhexanoyl-[ACP] + L-alanine + H(+) = (8S)-8-amino-7-oxononanoate + holo-[ACP] + CO2. The protein operates within cofactor biosynthesis; biotin biosynthesis. Catalyzes the decarboxylative condensation of pimeloyl-[acyl-carrier protein] and L-alanine to produce 8-amino-7-oxononanoate (AON), [acyl-carrier protein], and carbon dioxide. This chain is 8-amino-7-oxononanoate synthase, found in Burkholderia ambifaria (strain ATCC BAA-244 / DSM 16087 / CCUG 44356 / LMG 19182 / AMMD) (Burkholderia cepacia (strain AMMD)).